A 314-amino-acid polypeptide reads, in one-letter code: Probable 5-dehydro-4-deoxyglucarate dehydratase (314 aa).

This sequence belongs to the DapA family.

The catalysed reaction is 5-dehydro-4-deoxy-D-glucarate + H(+) = 2,5-dioxopentanoate + CO2 + H2O. Its pathway is carbohydrate acid metabolism; D-glucarate degradation; 2,5-dioxopentanoate from D-glucarate: step 2/2. The sequence is that of Probable 5-dehydro-4-deoxyglucarate dehydratase from Bradyrhizobium sp. (strain ORS 278).